The chain runs to 215 residues: N-(5'-phosphoribosyl)anthranilate isomerase (215 aa).

This sequence belongs to the TrpF family.

It catalyses the reaction N-(5-phospho-beta-D-ribosyl)anthranilate = 1-(2-carboxyphenylamino)-1-deoxy-D-ribulose 5-phosphate. It participates in amino-acid biosynthesis; L-tryptophan biosynthesis; L-tryptophan from chorismate: step 3/5. This chain is N-(5'-phosphoribosyl)anthranilate isomerase, found in Parvibaculum lavamentivorans (strain DS-1 / DSM 13023 / NCIMB 13966).